We begin with the raw amino-acid sequence, 77 residues long: MKRQKWIHEGLITESPSNGMFRVRLDNXDLIPSYVSGKIRRSLIRILPGDKVKIEVSRYDSTRGRIIYRLRNKDSKD.

The S1-like domain maps to Met1 to Arg71.

This sequence belongs to the IF-1 family. As to quaternary structure, component of the 30S ribosomal translation pre-initiation complex which assembles on the 30S ribosome in the order IF-2 and IF-3, IF-1 and N-formylmethionyl-tRNA(fMet); mRNA recruitment can occur at any time during PIC assembly.

The protein resides in the plastid. Its subcellular location is the chloroplast. One of the essential components for the initiation of protein synthesis. Stabilizes the binding of IF-2 and IF-3 on the 30S subunit to which N-formylmethionyl-tRNA(fMet) subsequently binds. Helps modulate mRNA selection, yielding the 30S pre-initiation complex (PIC). Upon addition of the 50S ribosomal subunit IF-1, IF-2 and IF-3 are released leaving the mature 70S translation initiation complex. This chain is Translation initiation factor IF-1, chloroplastic, found in Leucophyllum frutescens (Texas ranger).